Consider the following 188-residue polypeptide: Elongation factor P (188 aa).

This sequence belongs to the elongation factor P family.

The protein resides in the cytoplasm. The protein operates within protein biosynthesis; polypeptide chain elongation. In terms of biological role, involved in peptide bond synthesis. Stimulates efficient translation and peptide-bond synthesis on native or reconstituted 70S ribosomes in vitro. Probably functions indirectly by altering the affinity of the ribosome for aminoacyl-tRNA, thus increasing their reactivity as acceptors for peptidyl transferase. The polypeptide is Elongation factor P (Anaplasma phagocytophilum (strain HZ)).